We begin with the raw amino-acid sequence, 311 residues long: Natural killer cell receptor 2B4 (311 aa).

An N-terminal signal peptide occupies residues 1-19 (MLQQTVLLSLFLLLRAHQG). Residues 20 to 223 (QDCADSSEEV…CQSVPSKFNY (204 aa)) lie on the Extracellular side of the membrane. Cys22 and Cys118 are joined by a disulfide. Ig-like domains follow at residues 22–128 (CADS…LIFD) and 131–215 (ETPH…QSCQ). N-linked (GlcNAc...) asparagine glycosylation is found at Asn101, Asn144, Asn160, Asn183, Asn196, and Asn205. Cys153 and Cys195 are disulfide-bonded. The helical transmembrane segment at 224–247 (LPFMVSIGILVKFFHGAIDCFCVW) threads the bilayer. Residues 248-311 (NRKRKQSQSI…RRLFQFINRS (64 aa)) lie on the Cytoplasmic side of the membrane. Residues 275–301 (RDQRGHFRASGSSSDVRGDERGQRESD) form a disordered region. Residues 290-301 (VRGDERGQRESD) are compositionally biased toward basic and acidic residues.

In terms of assembly, interacts with CD48. Interacts (via phosphorylated ITSM 1-4) with SH2D1A (via SH2 domain); SH2D1A probably mediates association with FYN. Interacts (via phosphorylated ITSM 3) with PTPN11/SHP-2, INPP5D/SHIP1, PTPN6/SHP-1 and CSK; binding of SH2D1A/SAP prevents association with PTPN11, PTPN6 and CSK; conflictingly a similar association has been described for phosphorylated ITSM 1 also including GRB2 and PLCG1. Interacts weakly (via phosphorylated ITSM 2) with PTPN11/SHP-2 and CSK. Interacts with SH2D1B. Interacts with PIK3R1; PI3K recruits SH2D1A. Interacts with MHC class I proteins; the interaction is proposed to prevent self-killing of NK cells. N-linked glycosylation is essential for the binding to its ligand CD48. Also O-glycosylated, in contrast, O-linked sialylation has a negative impact on ligand binding. In terms of processing, phosphorylated by FYN and CSK on tyrosine residues following activation. Coligation with inhibitory receptors such as KIR2DL1 inhibits phosphorylation upon contact of NK cells with sensitive target cells.

It localises to the membrane. The protein resides in the cell membrane. It is found in the membrane raft. Its function is as follows. Heterophilic receptor of the signaling lymphocytic activation molecule (SLAM) family; its ligand is CD48. SLAM receptors triggered by homo- or heterotypic cell-cell interactions are modulating the activation and differentiation of a wide variety of immune cells and thus are involved in the regulation and interconnection of both innate and adaptive immune response. Activities are controlled by presence or absence of small cytoplasmic adapter proteins, SH2D1A/SAP and/or SH2D1B/EAT-2. Acts as activating natural killer (NK) cell receptor. Activating function implicates association with SH2D1A and FYN. Downstreaming signaling involves predominantly VAV1, and, to a lesser degree, INPP5D/SHIP1 and CBL. Signal attenuation in the absence of SH2D1A is proposed to be dependent on INPP5D and to a lesser extent PTPN6/SHP-1 and PTPN11/SHP-2. Stimulates NK cell cytotoxicity, production of IFN-gamma and granule exocytosis. Optimal expansion and activation of NK cells seems to be dependent on the engagement of CD244 with CD48 expressed on neighboring NK cells. Acts as costimulator in NK activation by enhancing signals by other NK receptors such as NCR3 and NCR1. At early stages of NK cell differentiation may function as an inhibitory receptor possibly ensuring the self-tolerance of developing NK cells. Involved in the regulation of CD8(+) T-cell proliferation; expression on activated T-cells and binding to CD48 provides costimulatory-like function for neighboring T-cells. Inhibits inflammatory responses in dendritic cells (DCs). In Rattus norvegicus (Rat), this protein is Natural killer cell receptor 2B4 (Cd244).